The sequence spans 267 residues: GTP cyclohydrolase FolE2 (267 aa).

It belongs to the GTP cyclohydrolase IV family.

It carries out the reaction GTP + H2O = 7,8-dihydroneopterin 3'-triphosphate + formate + H(+). The protein operates within cofactor biosynthesis; 7,8-dihydroneopterin triphosphate biosynthesis; 7,8-dihydroneopterin triphosphate from GTP: step 1/1. In terms of biological role, converts GTP to 7,8-dihydroneopterin triphosphate. The chain is GTP cyclohydrolase FolE2 from Geobacter sp. (strain M21).